Reading from the N-terminus, the 525-residue chain is tRNA-splicing endonuclease subunit Sen54 (525 aa).

An N-acetylmethionine modification is found at Met-1. A disordered region spans residues 1–46 (MEPEPEPGSVEVPAGRVLSASELRAARSRSQKLPQRSHGPKDFLPD). The span at 7–23 (PGSVEVPAGRVLSASEL) shows a compositional bias: low complexity. Ser-178 carries the post-translational modification Phosphoserine. A Phosphotyrosine modification is found at Tyr-180. Residues 220–232 (LPPVSLAASSSPA) are compositionally biased toward low complexity. Residues 220-273 (LPPVSLAASSSPACDQSSQYPEEKSQDSSPRQGSELPLQFLGSSEPCSDLARED) form a disordered region.

The protein belongs to the SEN54 family. As to quaternary structure, tRNA splicing endonuclease is a heterotetramer composed of TSEN2, TSEN15, TSEN34/LENG5 and TSEN54. tRNA splicing endonuclease complex also contains proteins of the pre-mRNA 3'-end processing machinery such as CLP1, CPSF1, CPSF4 and CSTF2.

Its subcellular location is the nucleus. It is found in the nucleolus. Functionally, non-catalytic subunit of the tRNA-splicing endonuclease complex, a complex responsible for identification and cleavage of the splice sites in pre-tRNA. It cleaves pre-tRNA at the 5' and 3' splice sites to release the intron. The products are an intron and two tRNA half-molecules bearing 2',3' cyclic phosphate and 5'-OH termini. There are no conserved sequences at the splice sites, but the intron is invariably located at the same site in the gene, placing the splice sites an invariant distance from the constant structural features of the tRNA body. The tRNA splicing endonuclease is also involved in mRNA processing via its association with pre-mRNA 3'-end processing factors, establishing a link between pre-tRNA splicing and pre-mRNA 3'-end formation, suggesting that the endonuclease subunits function in multiple RNA-processing events. The protein is tRNA-splicing endonuclease subunit Sen54 (Tsen54) of Mus musculus (Mouse).